A 353-amino-acid chain; its full sequence is Probable protease SohB (353 aa).

The chain crosses the membrane as a helical span at residues 11–31 (IFILEILTILLLILAVVGLII). Over residues 70-84 (QKQRTKAEKKAEKQN) the composition is skewed to basic and acidic residues. The segment at 70–93 (QKQRTKAEKKAEKQNAKKRKEKLK) is disordered. Ser-181 serves as the catalytic Nucleophile. The active-site Proton donor/acceptor is Lys-233.

The protein belongs to the peptidase S49 family.

It is found in the cell membrane. Its function is as follows. Possible protease. This is Probable protease SohB (sohB) from Haemophilus influenzae (strain ATCC 51907 / DSM 11121 / KW20 / Rd).